A 203-amino-acid chain; its full sequence is Holliday junction branch migration complex subunit RuvA (203 aa).

A domain I region spans residues 1-63 (MIGKLSGRVD…EDHINLYGFL (63 aa)). Residues 64 to 142 (SLEEKSFFNL…KISSSSAAIK (79 aa)) are domain II. A flexible linker region spans residues 143–149 (DSLNIKG). The interval 150 to 203 (ITPVASSEVIKALINMGFSRFEAQNAVQEIITKNPEISIDELIRTALKNRNSNF) is domain III.

Belongs to the RuvA family. Homotetramer. Forms an RuvA(8)-RuvB(12)-Holliday junction (HJ) complex. HJ DNA is sandwiched between 2 RuvA tetramers; dsDNA enters through RuvA and exits via RuvB. An RuvB hexamer assembles on each DNA strand where it exits the tetramer. Each RuvB hexamer is contacted by two RuvA subunits (via domain III) on 2 adjacent RuvB subunits; this complex drives branch migration. In the full resolvosome a probable DNA-RuvA(4)-RuvB(12)-RuvC(2) complex forms which resolves the HJ.

Its subcellular location is the cytoplasm. Its function is as follows. The RuvA-RuvB-RuvC complex processes Holliday junction (HJ) DNA during genetic recombination and DNA repair, while the RuvA-RuvB complex plays an important role in the rescue of blocked DNA replication forks via replication fork reversal (RFR). RuvA specifically binds to HJ cruciform DNA, conferring on it an open structure. The RuvB hexamer acts as an ATP-dependent pump, pulling dsDNA into and through the RuvAB complex. HJ branch migration allows RuvC to scan DNA until it finds its consensus sequence, where it cleaves and resolves the cruciform DNA. This Rickettsia bellii (strain OSU 85-389) protein is Holliday junction branch migration complex subunit RuvA.